The following is a 337-amino-acid chain: Heme A synthase (337 aa).

A run of 7 helical transmembrane segments spans residues 3 to 23 (LARWLWVVAGLVVTIVAIGGI), 94 to 114 (VIGLAFLLPMMWFWIRGMIPA), 120 to 140 (LLALFALICGQGALGWYMVAS), 154 to 174 (LSAHLLTALFLLAGLVWTALD), 191 to 211 (GVAWMASIILFIQILLGAWVA), 248 to 268 (FLLHFLHRWWAWVAVIALVVL), and 289 to 309 (TMVVLGIATVLSEVSLWIAVA). Residue His254 participates in heme binding. Residue His310 participates in heme binding. A helical transmembrane segment spans residues 311-331 (QLTGALLVISTAWAAHAIGTA).

Belongs to the COX15/CtaA family. Type 2 subfamily. Interacts with CtaB. The cofactor is heme b.

The protein resides in the cell membrane. The catalysed reaction is Fe(II)-heme o + 2 A + H2O = Fe(II)-heme a + 2 AH2. Its pathway is porphyrin-containing compound metabolism; heme A biosynthesis; heme A from heme O: step 1/1. Its function is as follows. Catalyzes the conversion of heme O to heme A by two successive hydroxylations of the methyl group at C8. The first hydroxylation forms heme I, the second hydroxylation results in an unstable dihydroxymethyl group, which spontaneously dehydrates, resulting in the formyl group of heme A. This chain is Heme A synthase, found in Erythrobacter litoralis (strain HTCC2594).